We begin with the raw amino-acid sequence, 447 residues long: Na(+)-translocating NADH-quinone reductase subunit A (447 aa).

The protein belongs to the NqrA family. As to quaternary structure, composed of six subunits; NqrA, NqrB, NqrC, NqrD, NqrE and NqrF.

The enzyme catalyses a ubiquinone + n Na(+)(in) + NADH + H(+) = a ubiquinol + n Na(+)(out) + NAD(+). Functionally, NQR complex catalyzes the reduction of ubiquinone-1 to ubiquinol by two successive reactions, coupled with the transport of Na(+) ions from the cytoplasm to the periplasm. NqrA to NqrE are probably involved in the second step, the conversion of ubisemiquinone to ubiquinol. This is Na(+)-translocating NADH-quinone reductase subunit A from Yersinia pseudotuberculosis serotype O:1b (strain IP 31758).